The following is a 414-amino-acid chain: TAR DNA-binding protein 43 (414 aa).

Residues Lys79, Lys84, Lys95, Lys102, and Lys181 each participate in a glycyl lysine isopeptide (Lys-Gly) (interchain with G-Cter in SUMO2) cross-link. 2 RRM domains span residues 104 to 200 (SDLI…RCTE) and 191 to 262 (RKVF…NAEP). Residue Ser183 is modified to Phosphoserine. An interaction with UBQLN2 region spans residues 216 to 414 (EVVDVFIPKP…MDSKSSGWGM (199 aa)). Positions 261 to 274 (EPKHNSNRQLERSG) are enriched in basic and acidic residues. Disordered stretches follow at residues 261-301 (EPKH…GLGN) and 341-414 (ASQQ…GWGM). Lys263 is covalently cross-linked (Glycyl lysine isopeptide (Lys-Gly) (interchain with G-Cter in SUMO2)). The span at 275–301 (RFGGNPGGFGNQGGFGNSRGGGAGLGN) shows a compositional bias: gly residues. Ser292 is subject to Phosphoserine. Arg293 carries the post-translational modification Omega-N-methylarginine. Composition is skewed to low complexity over residues 342–358 (SQQN…SQGS) and 368–392 (GSGN…SNAG). Over residues 393-402 (SGSGFNGGFG) the composition is skewed to gly residues. A compositionally biased stretch (polar residues) spans 405–414 (MDSKSSGWGM).

Homodimer. Homooligomer (via its N-terminal domain). Interacts with BRDT. Binds specifically to pyrimidine-rich motifs of TAR DNA and to single stranded TG repeated sequences. Binds to RNA, specifically to UG repeated sequences with a minimum of six contiguous repeats. Interacts with ATXN2; the interaction is RNA-dependent. Interacts with MATR3. Interacts with UBQLN2. Interacts with HNRNPA2B1. Interacts with ZNF106. Interacts with CNOT7/CAF1. Interacts with CRY2. Interacts with PPIA/CYPA; the interaction is dependent on RNA-binding activity of TARDBP and PPIase activity of PPIA/CYPA. Acetylation of PPIA/CYPA at 'Lys-125' favors the interaction of TARDBP with PPIA/CYPA. In terms of processing, hyperphosphorylated. Post-translationally, ubiquitinated.

It localises to the nucleus. It is found in the cytoplasm. The protein localises to the stress granule. The protein resides in the mitochondrion. Its function is as follows. RNA-binding protein that is involved in various steps of RNA biogenesis and processing. Preferentially binds, via its two RNA recognition motifs RRM1 and RRM2, to GU-repeats on RNA molecules predominantly localized within long introns and in the 3'UTR of mRNAs. In turn, regulates the splicing of many non-coding and protein-coding RNAs including proteins involved in neuronal survival, as well as mRNAs that encode proteins relevant for neurodegenerative diseases. Plays a role in maintaining mitochondrial homeostasis by regulating the processing of mitochondrial transcripts. Also regulates mRNA stability by recruiting CNOT7/CAF1 deadenylase on mRNA 3'UTR leading to poly(A) tail deadenylation and thus shortening. In response to oxidative insult, associates with stalled ribosomes localized to stress granules (SGs) and contributes to cell survival. Also participates in the normal skeletal muscle formation and regeneration, forming cytoplasmic myo-granules and binding mRNAs that encode sarcomeric proteins. Plays a role in the maintenance of the circadian clock periodicity via stabilization of the CRY1 and CRY2 proteins in a FBXL3-dependent manner. Negatively regulates the expression of CDK6. Regulates the expression of HDAC6, ATG7 and VCP in a PPIA/CYPA-dependent manner. The sequence is that of TAR DNA-binding protein 43 (Tardbp) from Mus musculus (Mouse).